Reading from the N-terminus, the 257-residue chain is Aspartate/glutamate leucyltransferase (257 aa).

This sequence belongs to the R-transferase family. Bpt subfamily.

It is found in the cytoplasm. The enzyme catalyses N-terminal L-glutamyl-[protein] + L-leucyl-tRNA(Leu) = N-terminal L-leucyl-L-glutamyl-[protein] + tRNA(Leu) + H(+). It carries out the reaction N-terminal L-aspartyl-[protein] + L-leucyl-tRNA(Leu) = N-terminal L-leucyl-L-aspartyl-[protein] + tRNA(Leu) + H(+). Functionally, functions in the N-end rule pathway of protein degradation where it conjugates Leu from its aminoacyl-tRNA to the N-termini of proteins containing an N-terminal aspartate or glutamate. This is Aspartate/glutamate leucyltransferase from Phenylobacterium zucineum (strain HLK1).